The following is a 76-amino-acid chain: Small ribosomal subunit protein uS17 (76 aa).

It belongs to the universal ribosomal protein uS17 family. As to quaternary structure, part of the 30S ribosomal subunit.

Functionally, one of the primary rRNA binding proteins, it binds specifically to the 5'-end of 16S ribosomal RNA. In Ruegeria sp. (strain TM1040) (Silicibacter sp.), this protein is Small ribosomal subunit protein uS17.